Reading from the N-terminus, the 149-residue chain is UPF0260 protein PFL_1499 (149 aa).

Belongs to the UPF0260 family.

This chain is UPF0260 protein PFL_1499, found in Pseudomonas fluorescens (strain ATCC BAA-477 / NRRL B-23932 / Pf-5).